A 292-amino-acid chain; its full sequence is 4-hydroxy-tetrahydrodipicolinate synthase (292 aa).

Pyruvate is bound at residue Thr45. The active-site Proton donor/acceptor is Tyr133. Lys161 functions as the Schiff-base intermediate with substrate in the catalytic mechanism. Residue Ile203 coordinates pyruvate.

Belongs to the DapA family. Homotetramer; dimer of dimers.

It is found in the cytoplasm. The enzyme catalyses L-aspartate 4-semialdehyde + pyruvate = (2S,4S)-4-hydroxy-2,3,4,5-tetrahydrodipicolinate + H2O + H(+). It participates in amino-acid biosynthesis; L-lysine biosynthesis via DAP pathway; (S)-tetrahydrodipicolinate from L-aspartate: step 3/4. Its function is as follows. Catalyzes the condensation of (S)-aspartate-beta-semialdehyde [(S)-ASA] and pyruvate to 4-hydroxy-tetrahydrodipicolinate (HTPA). The sequence is that of 4-hydroxy-tetrahydrodipicolinate synthase from Aromatoleum aromaticum (strain DSM 19018 / LMG 30748 / EbN1) (Azoarcus sp. (strain EbN1)).